The following is a 558-amino-acid chain: Atlastin-1 (558 aa).

Positions 1–29 (MAKSRRDRNSWGGFSEKSSDWSSEEEEPV) are disordered. The segment at 1–34 (MAKSRRDRNSWGGFSEKSSDWSSEEEEPVRKAGP) is N-terminal hypervariable region (HVR). At 1 to 449 (MAKSRRDRNS…NIFHAARTPA (449 aa)) the chain is on the cytoplasmic side. Residues Ser10, Ser22, and Ser23 each carry the phosphoserine modification. One can recognise a GB1/RHD3-type G domain in the interval 64–309 (DKEVVAVSVA…LIPWLLSPES (246 aa)). GDP-binding residues include Arg77, Lys78, Gly79, Lys80, Ser81, Phe82, Gln148, Arg217, Asp218, Val276, and Asn279. The GTP site is built by Arg77, Lys78, Gly79, Lys80, Ser81, and Phe82. Ser81 lines the Mg(2+) pocket. The GTP site is built by Arg217, Asp218, and Val276. The 3HB (three-helix bundle) domain stretch occupies residues 347-438 (MLQATAEANN…YIQYIKHNDS (92 aa)). At Lys395 the chain carries N6-acetyllysine. A coiled-coil region spans residues 412 to 439 (EFSRRYLQQLESEIDELYIQYIKHNDSK). Positions 439–447 (KNIFHAART) are linker. Residues 450–470 (TLFVVIFITYVIAGVTGFIGL) form a helical membrane-spanning segment. Residue Asp471 is a topological domain, lumenal. A helical membrane pass occupies residues 472–492 (IIASLCNMIMGLTLITLCTWA). Residues 493-558 (YIRYSGEYRE…PTEQPEKKKI (66 aa)) lie on the Cytoplasmic side of the membrane. The tract at residues 521-558 (NEALYKLYSAAATHRHLYQQAFPAPKSEPTEQPEKKKI) is autoinhibitory domain.

Belongs to the TRAFAC class dynamin-like GTPase superfamily. GB1/RHD3 GTPase family. GB1 subfamily. In terms of assembly, monomeric and homodimeric. The homodimer, transiently formed by two molecules on opposing membranes, is the active form mediating ER membrane fusion. Interacts with REEP1, REEP5, RTN3 and RTN4 (via the transmembrane region); these proteins are involved in endoplasmic reticulum tubular network organization. Interacts with ZFYVE27; both proteins are involved in endoplasmic reticulum tubular network organization. Interacts with ARL6IP1; both proteins are involved in endoplasmic reticulum tubular network organization. Interacts with SPAST; the interaction is direct, could recruit SPAST to Golgi membranes. Interacts (via N-terminal region) with MAP4K4 (via CNH regulatory domain). May interact with TMED2. Interacts with CPT1C. Phosphorylated. Phosphorylation, by different kinases, of the N-terminal hypervariable region (HVR) regulates the ATL1-mediated membrane tethering step. As to expression, detected in brain where it is abundant in lamina V of the cerebral cortex. Also expressed within the hippocampus, mainly in pyramidal neurons in CA1 and CA3. Weakly expressed in the striatum and more robustly in amygdala and several thalamic nuclei. Also detected in several mesopontine nuclei (at protein level).

The protein localises to the endoplasmic reticulum membrane. The protein resides in the golgi apparatus membrane. Its subcellular location is the cell projection. It is found in the axon. The catalysed reaction is GTP + H2O = GDP + phosphate + H(+). In terms of biological role, atlastin-1 (ATL1) is a membrane-anchored GTPase that mediates the GTP-dependent fusion of endoplasmic reticulum (ER) membranes, maintaining the continuous ER network. It facilitates the formation of three-way junctions where ER tubules intersect. Two atlastin-1 on neighboring ER tubules bind GTP and form loose homodimers through the GB1/RHD3-type G domains and 3HB regions. Upon GTP hydrolysis, the 3HB regions tighten, pulling the membranes together to drive their fusion. After fusion, the homodimer disassembles upon release of inorganic phosphate (Pi). Subsequently, GDP dissociates, resetting the monomers to a conformation ready for a new fusion cycle. May also regulate more or less directly Golgi biogenesis. Indirectly regulates axonal development. In Rattus norvegicus (Rat), this protein is Atlastin-1.